We begin with the raw amino-acid sequence, 478 residues long: Isoeugenol monooxygenase (478 aa).

Residues H167, H218, H282, and H471 each contribute to the Fe cation site.

It belongs to the carotenoid oxygenase family. Requires Fe(2+) as cofactor.

The enzyme catalyses (E)-isoeugenol + O2 = vanillin + acetaldehyde. Its activity is regulated as follows. Inhibited by Co(2+), Ni(2+) and Zn(2+), which may inhibit enzyme activity by replacing iron in the catalytic residues. Inhibited by incubation with high concentrations of the iron chelators 1,10-phenanthroline and Tiron. However, iron is not completely removed by the chelators, suggesting that iron is tightly bound to the enzyme. Functionally, involved in isoeugenol degradation. Catalyzes the oxidative cleavage of the side chain double-bond of isoeugenol to form vanillin and acetaldehyde. The protein is Isoeugenol monooxygenase of Pseudomonas nitroreducens.